We begin with the raw amino-acid sequence, 341 residues long: Cathepsin B-like cysteine proteinase 1 (341 aa).

An N-terminal signal peptide occupies residues M1–A19. Residues E20 to N88 constitute a propeptide, activation peptide. A glycan (N-linked (GlcNAc...) asparagine) is linked at N103. 6 cysteine pairs are disulfide-bonded: C104-C133, C116-C160, C152-C218, C153-C156, C189-C222, and C197-C209. C119 is an active-site residue. An N-linked (GlcNAc...) asparagine glycan is attached at N202. Residues H288 and N308 contribute to the active site.

The protein belongs to the peptidase C1 family.

Its function is as follows. Expression of the protease correlates with blood-feeding and suggests a role for the protease in blood digestion. This chain is Cathepsin B-like cysteine proteinase 1 (CP-1), found in Ostertagia ostertagi (Brown stomach worm).